The chain runs to 422 residues: MHYVSISFTHKNTDIGVREKLSFSDNNRRREILRLIGANDSIAESMALSTCNRVEIFAYVLDTQSSIRHILNSISILTLVPFEALELRADIYEDQGAIHHLFAVASSLDSLVVGETQIAGQLKEAFKFAYDNEDCGVNISSAMHFAFKCAAEVRALTTISKNPVSVSSVAVAKAKEIYGNIGGMSAVVIGAGEMSRLAAQHLINAEVNVIIINRDEIKAQTLAKELGELASYASFDKLSEYINRYRLIFSATGAPNAIITNEIIEQKDFHRYFFDIAVPRDIDIEEDEYIHVYAVDDLEEIVRTNLALREEQASIAYSIVGKSTTSFFKWRLSEGSTPAIKALRLKAKDIACKEIEKAVKKGYLKCSDQDEASKLVHQVFKAFLHTPSVRLKEKNSDDILKALEYLFDIKIQKDENLEGNLK.

Residues 50-53 (TCNR), Ser110, 115-117 (ETQ), and Gln121 each bind substrate. Cys51 functions as the Nucleophile in the catalytic mechanism. 190–195 (GAGEMS) contacts NADP(+).

This sequence belongs to the glutamyl-tRNA reductase family. In terms of assembly, homodimer.

The catalysed reaction is (S)-4-amino-5-oxopentanoate + tRNA(Glu) + NADP(+) = L-glutamyl-tRNA(Glu) + NADPH + H(+). It participates in porphyrin-containing compound metabolism; protoporphyrin-IX biosynthesis; 5-aminolevulinate from L-glutamyl-tRNA(Glu): step 1/2. Catalyzes the NADPH-dependent reduction of glutamyl-tRNA(Glu) to glutamate 1-semialdehyde (GSA). The sequence is that of Glutamyl-tRNA reductase from Campylobacter fetus subsp. fetus (strain 82-40).